Consider the following 584-residue polypeptide: Beta-fructofuranosidase, insoluble isoenzyme CWINV1 (584 aa).

Positions 1-28 (MTKEVCSNIGLWLLLTLLIGNYVVNLEA) are cleaved as a signal peptide. Residues 63–66 (WMND), Gln82, Trp90, and 125–126 (WS) contribute to the substrate site. Asp66 is an active-site residue. N-linked (GlcNAc...) asparagine glycans are attached at residues Asn159 and Asn186. Substrate contacts are provided by residues 191 to 192 (RD), Glu246, and Asp282. N-linked (GlcNAc...) asparagine glycans are attached at residues Asn342 and Asn446. Cys442 and Cys491 are disulfide-bonded.

The protein belongs to the glycosyl hydrolase 32 family. In terms of tissue distribution, expressed in seedlings, leaves, flowers, and seeds.

Its subcellular location is the secreted. It localises to the extracellular space. The protein localises to the apoplast. It is found in the cell wall. It carries out the reaction Hydrolysis of terminal non-reducing beta-D-fructofuranoside residues in beta-D-fructofuranosides.. In terms of biological role, beta-fructofuranosidase that can use sucrose and 1-kestose, and, to a lower extent, neokestose and levan, as substrates, but not inuline. The chain is Beta-fructofuranosidase, insoluble isoenzyme CWINV1 (CWINV1) from Arabidopsis thaliana (Mouse-ear cress).